We begin with the raw amino-acid sequence, 552 residues long: Phosphoglucomutase (552 aa).

Ser-143 functions as the Phosphoserine intermediate in the catalytic mechanism. Mg(2+)-binding residues include Ser-143, Asp-295, Asp-297, and Asp-299.

The protein belongs to the phosphohexose mutase family. Requires Mg(2+) as cofactor.

The enzyme catalyses alpha-D-glucose 1-phosphate = alpha-D-glucose 6-phosphate. The protein operates within glycolipid metabolism; diglucosyl-diacylglycerol biosynthesis. Its function is as follows. Catalyzes the interconversion between glucose-6-phosphate and alpha-glucose-1-phosphate. This is the first step in the biosynthesis of diglucosyl-diacylglycerol (Glc2-DAG), i.e. the predominant glycolipid found in the S.aureus membrane, which is also used as a membrane anchor for lipoteichoic acid (LTA). This is Phosphoglucomutase (pgcA) from Staphylococcus aureus (strain MRSA252).